The following is a 150-amino-acid chain: Ribonuclease K6 (150 aa).

Residues 1-23 (MVLCFPLLLLLLVLWGPVCLLHA) form the signal peptide. The active-site Proton acceptor is the His38. 4 disulfide bridges follow: Cys46–Cys104, Cys60–Cys114, Cys78–Cys129, and Cys85–Cys92. N-linked (GlcNAc...) asparagine glycosylation occurs at Asn55. Substrate is bound by residues 61–65 (KHQNT) and Lys86. An N-linked (GlcNAc...) asparagine glycan is attached at Asn100. Arg105 contributes to the substrate binding site. The active-site Proton donor is the His145.

This sequence belongs to the pancreatic ribonuclease family. Interacts (via N-terminus) with bacterial lipopolysaccharide (LPS).

It is found in the secreted. It localises to the lysosome. The protein localises to the cytoplasmic granule. Functionally, ribonuclease which shows a preference for the pyrimidines uridine and cytosine. Has potent antibacterial activity against a range of Gram-positive and Gram-negative bacteria, including P.aeruginosa, A.baumanii, M.luteus, S.aureus, E.faecalis, E.faecium, S.saprophyticus and E.coli. Causes loss of bacterial membrane integrity, and also promotes agglutination of Gram-negative bacteria. Probably contributes to urinary tract sterility. Bactericidal activity is independent of RNase activity. The protein is Ribonuclease K6 (RNASE6) of Papio hamadryas (Hamadryas baboon).